Consider the following 521-residue polypeptide: UDP-N-acetylmuramoyl-L-alanyl-D-glutamate--2,6-diaminopimelate ligase (521 aa).

Ser-33 contributes to the UDP-N-acetyl-alpha-D-muramoyl-L-alanyl-D-glutamate binding site. Residue 116 to 122 (GTNGKTT) participates in ATP binding. Residues 158–159 (TT), Ser-185, Gln-191, and Arg-193 each bind UDP-N-acetyl-alpha-D-muramoyl-L-alanyl-D-glutamate. The residue at position 225 (Lys-225) is an N6-carboxylysine. Residues Arg-409, 433-436 (DNPR), Gly-483, and Glu-487 contribute to the meso-2,6-diaminopimelate site. The short motif at 433 to 436 (DNPR) is the Meso-diaminopimelate recognition motif element.

The protein belongs to the MurCDEF family. MurE subfamily. It depends on Mg(2+) as a cofactor. Carboxylation is probably crucial for Mg(2+) binding and, consequently, for the gamma-phosphate positioning of ATP.

Its subcellular location is the cytoplasm. It carries out the reaction UDP-N-acetyl-alpha-D-muramoyl-L-alanyl-D-glutamate + meso-2,6-diaminopimelate + ATP = UDP-N-acetyl-alpha-D-muramoyl-L-alanyl-gamma-D-glutamyl-meso-2,6-diaminopimelate + ADP + phosphate + H(+). The protein operates within cell wall biogenesis; peptidoglycan biosynthesis. In terms of biological role, catalyzes the addition of meso-diaminopimelic acid to the nucleotide precursor UDP-N-acetylmuramoyl-L-alanyl-D-glutamate (UMAG) in the biosynthesis of bacterial cell-wall peptidoglycan. This is UDP-N-acetylmuramoyl-L-alanyl-D-glutamate--2,6-diaminopimelate ligase from Nitrosomonas europaea (strain ATCC 19718 / CIP 103999 / KCTC 2705 / NBRC 14298).